Reading from the N-terminus, the 889-residue chain is Translation initiation factor IF-2 (889 aa).

Residues 115 to 236 (EAEAQAKAEA…EAERYSDHHI (122 aa)) show a composition bias toward basic and acidic residues. Positions 115 to 293 (EAEAQAKAEA…RNRSTAPESM (179 aa)) are disordered. Over residues 257–270 (GRRARNKNTAKTKR) the composition is skewed to basic residues. A compositionally biased stretch (basic and acidic residues) spans 271 to 280 (GGKDARDGRE). The 170-residue stretch at 389–558 (PRAPVVTIMG…LLQAEVLELK (170 aa)) folds into the tr-type G domain. The interval 398 to 405 (GHVDHGKT) is G1. 398 to 405 (GHVDHGKT) contributes to the GTP binding site. A G2 region spans residues 423 to 427 (GITQH). The segment at 444 to 447 (DTPG) is G3. Residues 444–448 (DTPGH) and 498–501 (NKMD) each bind GTP. The G4 stretch occupies residues 498–501 (NKMD). The segment at 534–536 (SAK) is G5.

Belongs to the TRAFAC class translation factor GTPase superfamily. Classic translation factor GTPase family. IF-2 subfamily.

Its subcellular location is the cytoplasm. In terms of biological role, one of the essential components for the initiation of protein synthesis. Protects formylmethionyl-tRNA from spontaneous hydrolysis and promotes its binding to the 30S ribosomal subunits. Also involved in the hydrolysis of GTP during the formation of the 70S ribosomal complex. The sequence is that of Translation initiation factor IF-2 from Shewanella sp. (strain ANA-3).